Reading from the N-terminus, the 330-residue chain is Aspartate--ammonia ligase (330 aa).

It belongs to the class-II aminoacyl-tRNA synthetase family. AsnA subfamily.

It is found in the cytoplasm. The enzyme catalyses L-aspartate + NH4(+) + ATP = L-asparagine + AMP + diphosphate + H(+). Its pathway is amino-acid biosynthesis; L-asparagine biosynthesis; L-asparagine from L-aspartate (ammonia route): step 1/1. The chain is Aspartate--ammonia ligase from Streptococcus pyogenes serotype M5 (strain Manfredo).